The following is a 429-amino-acid chain: 4-hydroxy-3-methylbut-2-en-1-yl diphosphate synthase (flavodoxin) (429 aa).

[4Fe-4S] cluster contacts are provided by Cys-323, Cys-326, Cys-369, and Glu-376.

The protein belongs to the IspG family. [4Fe-4S] cluster is required as a cofactor.

It carries out the reaction (2E)-4-hydroxy-3-methylbut-2-enyl diphosphate + oxidized [flavodoxin] + H2O + 2 H(+) = 2-C-methyl-D-erythritol 2,4-cyclic diphosphate + reduced [flavodoxin]. It participates in isoprenoid biosynthesis; isopentenyl diphosphate biosynthesis via DXP pathway; isopentenyl diphosphate from 1-deoxy-D-xylulose 5-phosphate: step 5/6. Its function is as follows. Converts 2C-methyl-D-erythritol 2,4-cyclodiphosphate (ME-2,4cPP) into 1-hydroxy-2-methyl-2-(E)-butenyl 4-diphosphate. This Wolbachia sp. subsp. Brugia malayi (strain TRS) protein is 4-hydroxy-3-methylbut-2-en-1-yl diphosphate synthase (flavodoxin).